The chain runs to 306 residues: Reticulocalbin-2 (306 aa).

A signal peptide spans 1–22; it reads MESPTLLGLLLLLLGGPGTSLG. 6 consecutive EF-hand domains span residues 50-85, 86-121, 144-173, 175-210, 226-251, and 252-287; these read EQQK…SFKS, YIIE…RVID, KKRF…EEAD, MKEF…DPAA, NDYD…NNEG, and LAQE…FLNS. Ca(2+)-binding residues include Asp99, Asp101, Asp103, Arg105, and Glu110. Residues Asp188, Asp190, Asp192, Glu199, Asp229, Asp231, Asp233, Lys235, Glu240, Asp265, Asp267, Asp269, Arg271, and Glu276 each coordinate Ca(2+).

Belongs to the CREC family. May bind phospholipase A2, since the rat reticulocalbin-2 has been isolated on the phospholipase complex taipoxin columns. In terms of tissue distribution, expressed by the venom gland.

It is found in the secreted. This chain is Reticulocalbin-2, found in Crotalus adamanteus (Eastern diamondback rattlesnake).